The chain runs to 85 residues: Putative membrane protein insertion efficiency factor (85 aa).

Belongs to the UPF0161 family.

It is found in the cell inner membrane. Its function is as follows. Could be involved in insertion of integral membrane proteins into the membrane. The chain is Putative membrane protein insertion efficiency factor from Phenylobacterium zucineum (strain HLK1).